The chain runs to 271 residues: MAKVPDMFEDLKNCYSENEEDSSSIDHLFLNQKSFYDVSYGPLHESCMDQSVSLSISEISKTSKLSFKQSMVVVSTNGKVLKKRRLSLSQSIADDNLEAIANDSEEEIIKPRSAPFSFLSNMTYHIIRIIKHESILNDTLNQTIIRANDQYLTAAAIHNLDEAVKFDMGAYTSSKDDTKVPVILRISKTQLYVSAQDEDQPVLLKEMPEIPKTTTGGETNSLSSWETRGTKNYFISVAHPNLFIATKHDNWVCLAKGLPSITDFQILENQA.

The propeptide occupies 1-112; it reads MAKVPDMFED…DSEEEIIKPR (112 aa). The residue at position 82 (lysine 82) is an N6-acetyllysine. The segment at 82 to 86 is nuclear localization signal (NLS); it reads KKRRL. Serine 87 is modified (phosphoserine). 2 N-linked (GlcNAc...) asparagine glycosylation sites follow: asparagine 102 and asparagine 141.

It belongs to the IL-1 family. Monomer. Interacts with TMED10; the interaction mediates the translocation from the cytoplasm into the ERGIC (endoplasmic reticulum-Golgi intermediate compartment) and thereby secretion. Interacts with IL1R1. Interacts with S100A13; this interaction is the first step in the export of IL1A, followed by direct translocation of this complex across the plasma membrane. In terms of processing, acetylated within its nuclear localization sequence, which impacts subcellular localization. Proteolytic processed by CAPN1 in a calcium-dependent manner. Cleavage from 31 kDa precursor to 18 kDa biologically active molecules. Post-translationally, phosphorylated. Phosphorylation greatly enhances susceptibility to digestion and promotes the conversion of pre-IL1A alpha to the biologically active IL1A.

The protein localises to the nucleus. The protein resides in the cytoplasm. Its subcellular location is the secreted. Its function is as follows. Cytokine constitutively present intracellularly in nearly all resting non-hematopoietic cells that plays an important role in inflammation and bridges the innate and adaptive immune systems. After binding to its receptor IL1R1 together with its accessory protein IL1RAP, forms the high affinity interleukin-1 receptor complex. Signaling involves the recruitment of adapter molecules such as MYD88, IRAK1 or IRAK4. In turn, mediates the activation of NF-kappa-B and the three MAPK pathways p38, p42/p44 and JNK pathways. Within the cell, acts as an alarmin and cell death results in its liberation in the extracellular space after disruption of the cell membrane to induce inflammation and alert the host to injury or damage. In addition to its role as a danger signal, which occurs when the cytokine is passively released by cell necrosis, directly senses DNA damage and acts as signal for genotoxic stress without loss of cell integrity. This Cercocebus atys (Sooty mangabey) protein is Interleukin-1 alpha (IL1A).